The following is a 632-amino-acid chain: ATP-dependent DNA helicase RecQ (632 aa).

The Helicase ATP-binding domain maps to Ile-47–His-215. Met-60–Ser-67 serves as a coordination point for ATP. The short motif at Asp-159 to His-162 is the DEAH box element. The region spanning Pro-236–Gly-385 is the Helicase C-terminal domain. Positions 393, 410, 413, and 416 each coordinate Zn(2+). The region spanning Ala-544–His-624 is the HRDC domain.

This sequence belongs to the helicase family. RecQ subfamily. The cofactor is Mg(2+). Zn(2+) is required as a cofactor.

The enzyme catalyses Couples ATP hydrolysis with the unwinding of duplex DNA by translocating in the 3'-5' direction.. It carries out the reaction ATP + H2O = ADP + phosphate + H(+). Functionally, an ATP-dependent DNA helicase which unwinds DNA in a 3'-5' direction. Plays a role in recombination. The sequence is that of ATP-dependent DNA helicase RecQ from Pasteurella multocida (strain Pm70).